Here is a 360-residue protein sequence, read N- to C-terminus: GTPase Obg (360 aa).

An Obg domain is found at 1–156 (MFVDSVEIII…KCVRLELKLI (156 aa)). The OBG-type G domain maps to 157 to 360 (ADIGLVGFPN…LKFVLLEALP (204 aa)). GTP is bound by residues 163-170 (GFPNAGKS), 188-192 (FTTLV), 210-213 (DIPG), 279-282 (NKCD), and 341-343 (SAV). Mg(2+)-binding residues include Ser-170 and Thr-190.

Belongs to the TRAFAC class OBG-HflX-like GTPase superfamily. OBG GTPase family. Monomer. Requires Mg(2+) as cofactor.

It localises to the cytoplasm. Its function is as follows. An essential GTPase which binds GTP, GDP and possibly (p)ppGpp with moderate affinity, with high nucleotide exchange rates and a fairly low GTP hydrolysis rate. Plays a role in control of the cell cycle, stress response, ribosome biogenesis and in those bacteria that undergo differentiation, in morphogenesis control. In Helicobacter pylori (strain HPAG1), this protein is GTPase Obg.